A 282-amino-acid polypeptide reads, in one-letter code: Bifunctional protein FolD (282 aa).

NADP(+) contacts are provided by residues Gly-167–Ser-169 and Ser-192.

It belongs to the tetrahydrofolate dehydrogenase/cyclohydrolase family. In terms of assembly, homodimer.

It carries out the reaction (6R)-5,10-methylene-5,6,7,8-tetrahydrofolate + NADP(+) = (6R)-5,10-methenyltetrahydrofolate + NADPH. It catalyses the reaction (6R)-5,10-methenyltetrahydrofolate + H2O = (6R)-10-formyltetrahydrofolate + H(+). The protein operates within one-carbon metabolism; tetrahydrofolate interconversion. In terms of biological role, catalyzes the oxidation of 5,10-methylenetetrahydrofolate to 5,10-methenyltetrahydrofolate and then the hydrolysis of 5,10-methenyltetrahydrofolate to 10-formyltetrahydrofolate. The protein is Bifunctional protein FolD of Acidobacterium capsulatum (strain ATCC 51196 / DSM 11244 / BCRC 80197 / JCM 7670 / NBRC 15755 / NCIMB 13165 / 161).